Reading from the N-terminus, the 358-residue chain is Gibberellin receptor GID1B (358 aa).

The residue at position 2 (alanine 2) is an N-acetylalanine. The Involved in the stabilization of the negatively charged intermediate by the formation of the oxyanion hole signature appears at 113–115; that stretch reads HGG. Residues 115–116, tyrosine 127, and serine 191 each bind gibberellin A4; that span reads GS. Residues serine 116, tyrosine 127, serine 191, and phenylalanine 238 each coordinate gibberellin A3. Residue serine 191 is part of the active site. Aspartate 289 is a catalytic residue. Glycine 320 contacts gibberellin A4. Glycine 320 provides a ligand contact to gibberellin A3.

This sequence belongs to the 'GDXG' lipolytic enzyme family. As to quaternary structure, interacts with the DELLA proteins GAI, RGA, RGL1, RGL2 and RGL3 in a GA-dependent manner. As to expression, widely expressed.

The protein resides in the nucleus. Functionally, functions as a soluble gibberellin (GA) receptor. GA is an essential hormone that regulates growth and development in plants. Binds with high affinity the biologically active gibberellin GA4, but has no affinity for the biologically inactive GAs. In response to GA, interacts with specific DELLA proteins, known as repressors of GA-induced growth, and targets them for degradation via proteasome. Seems to be required for GA signaling that controls root growth, seed germination and flower development. May function as a dominant GA receptor at low GA concentrations in germination. Partially redundant with GID1A and GID1C. The chain is Gibberellin receptor GID1B (GID1B) from Arabidopsis thaliana (Mouse-ear cress).